The chain runs to 208 residues: Small ribosomal subunit protein uS4 (208 aa).

A disordered region spans residues 24–52 (GVKPFDVKTKKANKAPGQHGQARGGKQSE). Residues 98–160 (SRLDNVVYRM…AKQQLRIKNA (63 aa)) form the S4 RNA-binding domain.

It belongs to the universal ribosomal protein uS4 family. As to quaternary structure, part of the 30S ribosomal subunit. Contacts protein S5. The interaction surface between S4 and S5 is involved in control of translational fidelity.

In terms of biological role, one of the primary rRNA binding proteins, it binds directly to 16S rRNA where it nucleates assembly of the body of the 30S subunit. With S5 and S12 plays an important role in translational accuracy. In Acinetobacter baumannii (strain ACICU), this protein is Small ribosomal subunit protein uS4.